The primary structure comprises 470 residues: Acetyl-CoA decarbonylase/synthase complex subunit gamma (470 aa).

The region spanning 1-62 is the 4Fe-4S domain; it reads MKVKSPLEVY…DPKVKKKLEE (62 aa). The [4Fe-4S] cluster site is built by Cys18, Cys21, Cys26, and Cys43.

Heterodimer of delta and gamma chains. The ACDS complex is made up of alpha, epsilon, beta, gamma and delta chains with a probable stoichiometry of (alpha(2)epsilon(2))(4)-beta(8)-(gamma(1)delta(1))(8). Corrinoid is required as a cofactor. The cofactor is [4Fe-4S] cluster.

It catalyses the reaction 5,6,7,8-tetrahydrosarcinapterin + methyl-Co(III)-[corrinoid Fe-S protein] = 5-methyltetrahydrosarcinapterin + Co(I)-[corrinoid Fe-S protein] + H(+). Its function is as follows. Part of a complex that catalyzes the reversible cleavage of acetyl-CoA, allowing autotrophic growth from CO(2). The protein is Acetyl-CoA decarbonylase/synthase complex subunit gamma of Archaeoglobus fulgidus (strain ATCC 49558 / DSM 4304 / JCM 9628 / NBRC 100126 / VC-16).